Reading from the N-terminus, the 268-residue chain is Taurine import ATP-binding protein TauB (268 aa).

Positions 4 to 236 (LAIRNISMRF…EGVDADLREV (233 aa)) constitute an ABC transporter domain. 41–48 (GPSGCGKT) is a binding site for ATP.

This sequence belongs to the ABC transporter superfamily. Taurine importer (TC 3.A.1.17.1) family. In terms of assembly, the complex is composed of two ATP-binding proteins (TauB), two transmembrane proteins (TauC) and a solute-binding protein (TauA).

The protein localises to the cell inner membrane. It catalyses the reaction taurine(out) + ATP + H2O = taurine(in) + ADP + phosphate + H(+). In terms of biological role, part of the ABC transporter complex TauABC involved in taurine import. Responsible for energy coupling to the transport system. The chain is Taurine import ATP-binding protein TauB from Jannaschia sp. (strain CCS1).